A 427-amino-acid chain; its full sequence is Enolase (427 aa).

Q163 is a binding site for (2R)-2-phosphoglycerate. The active-site Proton donor is the E205. Mg(2+) contacts are provided by D242, E285, and D312. (2R)-2-phosphoglycerate-binding residues include K337, R366, S367, and K388. K337 acts as the Proton acceptor in catalysis.

It belongs to the enolase family. Mg(2+) is required as a cofactor.

The protein localises to the cytoplasm. The protein resides in the secreted. It is found in the cell surface. The catalysed reaction is (2R)-2-phosphoglycerate = phosphoenolpyruvate + H2O. Its pathway is carbohydrate degradation; glycolysis; pyruvate from D-glyceraldehyde 3-phosphate: step 4/5. Its function is as follows. Catalyzes the reversible conversion of 2-phosphoglycerate (2-PG) into phosphoenolpyruvate (PEP). It is essential for the degradation of carbohydrates via glycolysis. In Rhodopseudomonas palustris (strain BisB5), this protein is Enolase.